A 448-amino-acid polypeptide reads, in one-letter code: 26S proteasome regulatory subunit 4 homolog (448 aa).

The segment covering 1 to 16 (MGQGTPGGMGKQGGAP) has biased composition (gly residues). Disordered regions lie at residues 1-56 (MGQG…AAAR) and 93-112 (LRPTEDKTEEDRSKVDDLRG). Basic and acidic residues-rich tracts occupy residues 17–33 (GDRKPGGDGDKKDRKFE) and 93–111 (LRPTEDKTEEDRSKVDDLR). 234–241 (GEPGTGKT) is an ATP binding site.

Belongs to the AAA ATPase family.

The protein resides in the cytoplasm. Its subcellular location is the nucleus. The 26S proteasome is involved in the ATP-dependent degradation of ubiquitinated proteins. The regulatory (or ATPase) complex confers ATP dependency and substrate specificity to the 26S complex. The polypeptide is 26S proteasome regulatory subunit 4 homolog (TBP2) (Oryza sativa subsp. japonica (Rice)).